An 81-amino-acid polypeptide reads, in one-letter code: MNQSAQNYFSVQKPSETSSGPYTSPPPIGYPTRDAVVGDPPAAAVETNSKGVNPEAIMSCFSTCMECIFCCGVCSSLCTSE.

The segment covering 1–22 (MNQSAQNYFSVQKPSETSSGPY) has biased composition (polar residues). The tract at residues 1-34 (MNQSAQNYFSVQKPSETSSGPYTSPPPIGYPTRD) is disordered. A helical membrane pass occupies residues 56–74 (AIMSCFSTCMECIFCCGVC).

Belongs to the CYSTM1 family. In terms of tissue distribution, expressed at very low levels in seedlings and petioles, and at higher levels in leaves. Also present in phloem sap.

It localises to the cell membrane. Modulates resistance against pathogens including oomycetes (e.g. Hyaloperonospora parasitica and Phytophthora brassicae) and fungi (e.g. Phytophthora brassicae). Controls the abscisic acid-mediated (ABA) signaling pathways. Regulator of the flowering time in response to stress (e.g. UV-C). Regulates polar lipid content; promotes phosphatidylinositol (PI) and 18:0 but prevents 18:2 and 18:3 polar lipids accumulation. The sequence is that of Cysteine-rich and transmembrane domain-containing protein PCC1 (PCC1) from Arabidopsis thaliana (Mouse-ear cress).